We begin with the raw amino-acid sequence, 149 residues long: D-aminoacyl-tRNA deacylase (149 aa).

A Gly-cisPro motif, important for rejection of L-amino acids motif is present at residues 139-140 (GP).

Belongs to the DTD family. As to quaternary structure, homodimer.

It localises to the cytoplasm. It catalyses the reaction glycyl-tRNA(Ala) + H2O = tRNA(Ala) + glycine + H(+). The enzyme catalyses a D-aminoacyl-tRNA + H2O = a tRNA + a D-alpha-amino acid + H(+). Functionally, an aminoacyl-tRNA editing enzyme that deacylates mischarged D-aminoacyl-tRNAs. Also deacylates mischarged glycyl-tRNA(Ala), protecting cells against glycine mischarging by AlaRS. Acts via tRNA-based rather than protein-based catalysis; rejects L-amino acids rather than detecting D-amino acids in the active site. By recycling D-aminoacyl-tRNA to D-amino acids and free tRNA molecules, this enzyme counteracts the toxicity associated with the formation of D-aminoacyl-tRNA entities in vivo and helps enforce protein L-homochirality. This chain is D-aminoacyl-tRNA deacylase (DTD1), found in Candida glabrata (strain ATCC 2001 / BCRC 20586 / JCM 3761 / NBRC 0622 / NRRL Y-65 / CBS 138) (Yeast).